Consider the following 320-residue polypeptide: 1-aminocyclopropane-1-carboxylate oxidase (320 aa).

The Fe2OG dioxygenase domain maps to 154–254 (PTFGTKVSNY…RMSLASFYNP (101 aa)). Residues His-178, Asp-180, and His-235 each coordinate Fe cation.

It belongs to the iron/ascorbate-dependent oxidoreductase family. It depends on Fe cation as a cofactor.

It catalyses the reaction 1-aminocyclopropane-1-carboxylate + L-ascorbate + O2 = ethene + L-dehydroascorbate + hydrogen cyanide + CO2 + 2 H2O. Its pathway is alkene biosynthesis; ethylene biosynthesis via S-adenosyl-L-methionine; ethylene from S-adenosyl-L-methionine: step 2/2. The sequence is that of 1-aminocyclopropane-1-carboxylate oxidase (ACO) from Persea americana (Avocado).